Reading from the N-terminus, the 295-residue chain is MRSTNSFVVHNWVSLVPEMEMDTQERLYLLVDGAQISHLAQALYRLSGELVLEPLYLFPPFEQLKEVSPYLVLATDTVKTWFLEQNQGLAGFFFASLDSIEEIAEQLRRLIQVESPYGSTVFLKMANSECAYVLLSTQCQPLWKVINRAWLPTRQGWQYVQRPELTATQDTPVRFKLTDEQWQRLGNITWLNTLETVERHVQQWFPDLAQQWQSDPELFHRHAQWAYQQGFSSERDLMLFFNVLGFLGVDALEKGKYPEIDPLLHQASSRTPSQRIEAAAELAYQHSQSSQEVQG.

Plays an accessory role in VasX-mediated bacterial killing. This Vibrio cholerae serotype O1 (strain ATCC 39315 / El Tor Inaba N16961) protein is Accessory protein VasW.